The sequence spans 1171 residues: DNA polymerase catalytic subunit (1171 aa).

Disordered regions lie at residues 647-687, 704-735, and 1149-1171; these read GTPA…PFRT, PGGG…EPAP, and VEEE…DSSR. Positions 649-662 are enriched in pro residues; sequence PARPPETPARPPET. Low complexity-rich tracts occupy residues 663-674 and 709-725; these read PAAGPSGAAHAG and VSSA…PSET. Over residues 1149-1158 the composition is skewed to basic and acidic residues; sequence VEEEVCESER.

This sequence belongs to the DNA polymerase type-B family.

It localises to the host nucleus. The catalysed reaction is DNA(n) + a 2'-deoxyribonucleoside 5'-triphosphate = DNA(n+1) + diphosphate. This chain is DNA polymerase catalytic subunit (DPOL), found in Tupaia belangeri (Common tree shrew).